We begin with the raw amino-acid sequence, 122 residues long: Large ribosomal subunit protein bL12 (122 aa).

The protein belongs to the bacterial ribosomal protein bL12 family. In terms of assembly, homodimer. Part of the ribosomal stalk of the 50S ribosomal subunit. Forms a multimeric L10(L12)X complex, where L10 forms an elongated spine to which 2 to 4 L12 dimers bind in a sequential fashion. Binds GTP-bound translation factors.

Functionally, forms part of the ribosomal stalk which helps the ribosome interact with GTP-bound translation factors. Is thus essential for accurate translation. The polypeptide is Large ribosomal subunit protein bL12 (Yersinia pseudotuberculosis serotype O:1b (strain IP 31758)).